Consider the following 301-residue polypeptide: GTPase Era (301 aa).

Positions 7-175 (YCGFIAIVGR…AAIVRKHLPE (169 aa)) constitute an Era-type G domain. The G1 stretch occupies residues 15–22 (GRPNVGKS). 15-22 (GRPNVGKS) contacts GTP. The G2 stretch occupies residues 41-45 (QTTRH). The tract at residues 62–65 (DTPG) is G3. GTP is bound by residues 62–66 (DTPGL) and 124–127 (NKVD). The segment at 124-127 (NKVD) is G4. A G5 region spans residues 154–156 (ISA). The KH type-2 domain occupies 206-283 (LGAELPYSVT…HLELWVKVKS (78 aa)).

It belongs to the TRAFAC class TrmE-Era-EngA-EngB-Septin-like GTPase superfamily. Era GTPase family. Monomer.

It is found in the cytoplasm. The protein resides in the cell inner membrane. Functionally, an essential GTPase that binds both GDP and GTP, with rapid nucleotide exchange. Plays a role in 16S rRNA processing and 30S ribosomal subunit biogenesis and possibly also in cell cycle regulation and energy metabolism. This is GTPase Era from Shigella flexneri serotype 5b (strain 8401).